Reading from the N-terminus, the 447-residue chain is C4-dicarboxylate transport protein (447 aa).

The next 9 helical transmembrane spans lie at 13-33 (SLYFQVITAIVIGVLLGHYWP), 49-69 (LIKMIIAPIIFCTVVVGIAGM), 81-101 (LALLYFEVVSTLALLLGLLIV), 149-169 (AFAKGEMLQVLLFSVMFGFAL), 189-209 (VLFAIVGFIMKVAPIGAFGAM), 227-247 (LMGTFYATCLVFIFGVLGLIA), 302-322 (GYSFNLDGTSIYLTMAAVFIA), 336-356 (TLLAVLLLTSKGAAGVTGSGF), and 357-377 (IVLAATLSAVGGVPVAGLALI). The disordered stretch occupies residues 422–447 (ETEAEANEPEAVLDEIDQHMPVPAAR). Residues 425 to 436 (AEANEPEAVLDE) are compositionally biased toward acidic residues.

Belongs to the dicarboxylate/amino acid:cation symporter (DAACS) (TC 2.A.23) family.

It is found in the cell inner membrane. Its function is as follows. Responsible for the transport of dicarboxylates such as succinate, fumarate, and malate from the periplasm across the membrane. The sequence is that of C4-dicarboxylate transport protein from Leptothrix cholodnii (strain ATCC 51168 / LMG 8142 / SP-6) (Leptothrix discophora (strain SP-6)).